Here is a 726-residue protein sequence, read N- to C-terminus: NHL repeat-containing protein 2 (726 aa).

6 NHL repeats span residues 212 to 254 (KLYK…VWKN), 265 to 307 (NPGR…IDLE), 335 to 369 (ISSPWDVVFGRSGPEVQRDNILWIAMAGTHQIWAL), 409 to 439 (FAQPSGLSLASEGPWSCLFVADSESSTVRTV), 461 to 505 (AFGD…VDPK), and 518 to 562 (ASNM…LDLE).

Monomer.

Its subcellular location is the cytoplasm. The protein resides in the cytosol. In terms of biological role, required for normal embryonic development. In Bos taurus (Bovine), this protein is NHL repeat-containing protein 2 (NHLRC2).